Here is a 645-residue protein sequence, read N- to C-terminus: Putative galactocerebrosidase (645 aa).

The signal sequence occupies residues 1–16 (MFSIFIKIILILPSIA). The substrate site is built by Thr-87 and Trp-128. The N-linked (GlcNAc...) asparagine glycan is linked to Asn-141. Position 171 (Asn-171) interacts with substrate. Glu-172 functions as the Proton donor/acceptor in the catalytic mechanism. N-linked (GlcNAc...) asparagine glycans are attached at residues Asn-174 and Asn-193. The Nucleophile role is filled by Glu-248. An intrachain disulfide couples Cys-261 to Cys-365. Asn-274, Asn-395, Asn-411, Asn-532, Asn-616, Asn-620, and Asn-638 each carry an N-linked (GlcNAc...) asparagine glycan.

It belongs to the glycosyl hydrolase 59 family.

The catalysed reaction is a beta-D-Gal-(1&lt;-&gt;1')-ceramide + H2O = an N-acyl-sphingoid base + D-galactose. The enzyme catalyses a beta-D-galactosyl-(1&lt;-&gt;1')-N-acylsphing-4-enine + H2O = an N-acylsphing-4-enine + D-galactose. Functionally, hydrolyzes the galactose ester bonds of galactosylceramide, galactosylsphingoid base, lactosylceramide, and monogalactosyldiglyceride. C.elegans contain specific sphingoid bases, which are unique or different in structure compared to the sphingoid bases found in other animals. Two examples of these distinctive compounds are: 15-methylhexadecasphinganine and 15-methylhexadecasphing-4-enine. This Caenorhabditis elegans protein is Putative galactocerebrosidase.